The sequence spans 419 residues: LWamide neuropeptides (419 aa).

An N-terminal signal peptide occupies residues 1–27 (MEKEMRNLMLLVLLTVILDNGIGKCNA). Residues 27–48 (AKSEEDQDGNARNNRIDKNDDN) form a disordered region. Residues 28-104 (KSEEDQDGNA…ENLDIDSTVQ (77 aa)) constitute a propeptide that is removed on maturation. Residue tryptophan 110 is modified to Tryptophan amide. Residues 113-140 (EADFDNTRAHDSAQISDEKQSGLWVGDA) constitute a propeptide that is removed on maturation. Residues 120–132 (RAHDSAQISDEKQ) show a composition bias toward basic and acidic residues. The segment at 120–332 (RAHDSAQISD…PGLWGRQVED (213 aa)) is disordered. At tryptophan 146 the chain carries Tryptophan amide. Positions 149–150 (DA) are excised as a propeptide. The residue at position 156 (tryptophan 156) is a Tryptophan amide. Residues 159-160 (DA) constitute a propeptide that is removed on maturation. Tryptophan amide is present on tryptophan 166. A propeptide spanning residues 169–170 (DA) is cleaved from the precursor. A Tryptophan amide modification is found at tryptophan 176. Residues 179 to 180 (DA) constitute a propeptide that is removed on maturation. A Tryptophan amide modification is found at tryptophan 186. Residues 189-190 (DA) constitute a propeptide that is removed on maturation. Residue tryptophan 196 is modified to Tryptophan amide. The propeptide occupies 199–200 (DA). Position 206 is a tryptophan amide (tryptophan 206). Residues 209-210 (DA) constitute a propeptide that is removed on maturation. Position 216 is a tryptophan amide (tryptophan 216). The propeptide at 218-220 (GDA) is seems to have a sequencing error or a mutation in position 218; Gly instead of Arg. At tryptophan 226 the chain carries Tryptophan amide. Residues 229–230 (DA) constitute a propeptide that is removed on maturation. Tryptophan amide is present on tryptophan 236. Residues 239–240 (DA) constitute a propeptide that is removed on maturation. The residue at position 246 (tryptophan 246) is a Tryptophan amide. A propeptide spanning residues 249-250 (DA) is cleaved from the precursor. The residue at position 256 (tryptophan 256) is a Tryptophan amide. Positions 259–260 (DA) are excised as a propeptide. Tryptophan 266 carries the post-translational modification Tryptophan amide. Residues 269–270 (DA) constitute a propeptide that is removed on maturation. Tryptophan amide is present on tryptophan 276. A propeptide spanning residues 279 to 280 (DT) is cleaved from the precursor. The residue at position 286 (tryptophan 286) is a Tryptophan amide. A propeptide spanning residues 289-290 (DA) is cleaved from the precursor. Tryptophan 296 is modified (tryptophan amide). 2 propeptides span residues 299–300 (DA) and 309–320 (DNNVIKSRSDDA). At tryptophan 326 the chain carries Tryptophan amide. The propeptide occupies 329–419 (QVEDGPTKIW…RRNNKKNNKF (91 aa)).

The protein belongs to the LWamide neuropeptide family. As to expression, in planula larvae, expressed in a narrow ring of ectodermal neurosensory cells around the widest circumference at the anterior of the larvae. In primary polyps, expression is confined to endodermal cells of the hypostome. In mature polyps, expression is strong in the epidermis from the tentacle level to the base of the polyp and weak in the gastrodermal cells in the apical hypostome.

Its subcellular location is the secreted. Functionally, LWamide peptides may be involved in induction of metamorphosis. The chain is LWamide neuropeptides from Hydractinia echinata (Snail fur).